A 123-amino-acid polypeptide reads, in one-letter code: Large ribosomal subunit protein uL14c (123 aa).

Belongs to the universal ribosomal protein uL14 family. In terms of assembly, part of the 50S ribosomal subunit. Interacts with IOJAP.

Its subcellular location is the plastid. The protein resides in the chloroplast. Its function is as follows. Binds to 23S rRNA. The protein is Large ribosomal subunit protein uL14c of Zea mays (Maize).